We begin with the raw amino-acid sequence, 130 residues long: Small ribosomal subunit protein uS8 (130 aa).

This sequence belongs to the universal ribosomal protein uS8 family. Part of the 30S ribosomal subunit. Contacts proteins S5 and S12.

In terms of biological role, one of the primary rRNA binding proteins, it binds directly to 16S rRNA central domain where it helps coordinate assembly of the platform of the 30S subunit. This chain is Small ribosomal subunit protein uS8, found in Hahella chejuensis (strain KCTC 2396).